The sequence spans 106 residues: UPF0145 protein GSU2791 (106 aa).

This sequence belongs to the UPF0145 family.

This chain is UPF0145 protein GSU2791, found in Geobacter sulfurreducens (strain ATCC 51573 / DSM 12127 / PCA).